Consider the following 683-residue polypeptide: Actin-binding LIM protein 3 (683 aa).

At methionine 1 the chain carries N-acetylmethionine. 4 LIM zinc-binding domains span residues 21 to 80 (IQCY…LYGT), 80 to 140 (TRCD…MASS), 149 to 208 (SHCA…QFGI), and 208 to 268 (IKCE…ARAE). Phosphoserine occurs at positions 277, 280, 282, 286, 290, 337, 372, and 373. Positions 372–472 (SSPGYIDSPT…EDISQTSKYS (101 aa)) are disordered. Tyrosine 376 carries the post-translational modification Phosphotyrosine. Residues serine 379 and serine 388 each carry the phosphoserine modification. Polar residues-rich tracts occupy residues 380–393 (PTYS…TFSR), 406–426 (GRSS…TSYQ), and 454–471 (STAT…TSKY). Serine 493, serine 503, and serine 504 each carry phosphoserine. Residue threonine 543 is modified to Phosphothreonine. 3 positions are modified to phosphoserine: serine 567, serine 576, and serine 607. The 69-residue stretch at 615–683 (MREYKIYPYE…NELKKQARLF (69 aa)) folds into the HP domain. Arginine 631 is subject to Omega-N-methylarginine.

In terms of assembly, directly interacts with F-actin and ABRA. As to expression, expressed predominantly in heart and brain.

It localises to the cytoplasm. In terms of biological role, may act as scaffold protein. May stimulate ABRA activity and ABRA-dependent SRF transcriptional activity. The chain is Actin-binding LIM protein 3 (ABLIM3) from Homo sapiens (Human).